The following is a 33-amino-acid chain: Beta-amanitin proprotein (33 aa).

Residues 1 to 10 (MSDINATRLP) constitute a propeptide that is removed on maturation. Residues 11–18 (IWGIGCDP) constitute a cross-link (cyclopeptide (Ile-Pro)). Residues 12-16 (WGIGC) constitute a cross-link (2'-cysteinyl-6'-hydroxytryptophan sulfoxide (Trp-Cys)). The propeptide occupies 19–33 (CVGDDVTAVLTRGEA).

Belongs to the MSDIN fungal toxin family. Processed by the macrocyclase-peptidase enzyme POPB to yield a toxic cyclic decapeptide. POPB first removes 10 residues from the N-terminus. Conformational trapping of the remaining peptide forces the enzyme to release this intermediate rather than proceed to macrocyclization. The enzyme rebinds the remaining peptide in a different conformation and catalyzes macrocyclization of the N-terminal 8 residues.

Its function is as follows. Toxin belonging to the bicyclic octapeptides amatoxins that acts by binding non-competitively to RNA polymerase II and greatly slowing the elongation of transcripts from target promoters. This chain is Beta-amanitin proprotein, found in Amanita pallidorosea.